We begin with the raw amino-acid sequence, 420 residues long: Putative polyketide beta-ketoacyl synthase 1 (420 aa).

A Ketosynthase family 3 (KS3) domain is found at 3–414 (QRRVAITGIE…GFQSAMVLTS (412 aa)). Active-site for beta-ketoacyl synthase activity residues include Cys-169, His-307, and His-344.

Belongs to the thiolase-like superfamily. Beta-ketoacyl-ACP synthases family.

Its pathway is antifungal biosynthesis; monensin biosynthesis. This chain is Putative polyketide beta-ketoacyl synthase 1, found in Streptomyces virginiae (Streptomyces cinnamonensis).